The chain runs to 73 residues: Cell division protein ZapB (73 aa).

The stretch at 3–66 (LELLSQLETK…SWSDKVNGLV (64 aa)) forms a coiled coil.

This sequence belongs to the ZapB family. As to quaternary structure, homodimer. The ends of the coiled-coil dimer bind to each other, forming polymers. Interacts with FtsZ.

It is found in the cytoplasm. Non-essential, abundant cell division factor that is required for proper Z-ring formation. It is recruited early to the divisome by direct interaction with FtsZ, stimulating Z-ring assembly and thereby promoting cell division earlier in the cell cycle. Its recruitment to the Z-ring requires functional FtsA or ZipA. This is Cell division protein ZapB from Shewanella frigidimarina (strain NCIMB 400).